A 1025-amino-acid chain; its full sequence is Complement receptor type 2 (1025 aa).

The signal sequence occupies residues 1 to 11 (MLTWFLFYFSE). A Sushi 1 domain is found at 12–75 (ISCDPPPEVK…WDKAPPICES (64 aa)). Residues 12–963 (ISCDPPPEVK…PLALCKYRRW (952 aa)) lie on the Extracellular side of the membrane. Intrachain disulfides connect C14/C56 and C42/C73. N-linked (GlcNAc...) asparagine glycans are attached at residues N77 and N113. Sushi domains are found at residues 80–140 (ISCS…VCES), 144–204 (LECP…TCKE), 205–265 (AQCE…VCKE), 266–336 (ILCP…YCVL), 341–400 (VLCL…VCEK), 401–460 (GCQA…QCTV), 461–516 (AECK…LCKE), 517–587 (ITCP…LCKL), 592–651 (VQCT…LCKK), 652–706 (EGCE…VCTV), 707–771 (ILCQ…QCLQ), 776–835 (THCP…TCIR), 839–899 (LGCQ…FCKE), and 900–960 (VNCS…LCKY). Cystine bridges form between C82–C124, C110–C138, C146–C189, C175–C202, C207–C248, C234–C263, C268–C317, C297–C334, C343–C385, C371–C398, C402–C445, C431–C458, C463–C501, C487–C514, C519–C568, C548–C585, C594–C636, C622–C649, C654–C689, C675–C704, C709–C752, C738–C769, C778–C820, C806–C833, C841–C884, and C870–C897. Residues N276, N316, N364, and N380 are each glycosylated (N-linked (GlcNAc...) asparagine). A glycan (N-linked (GlcNAc...) asparagine) is linked at N484. Residue N527 is glycosylated (N-linked (GlcNAc...) asparagine). N615 and N639 each carry an N-linked (GlcNAc...) asparagine glycan. N694 carries an N-linked (GlcNAc...) asparagine glycan. N754, N790, N813, N823, and N851 each carry an N-linked (GlcNAc...) asparagine glycan. N901 is a glycosylation site (N-linked (GlcNAc...) asparagine). Intrachain disulfides connect C902–C945 and C931–C958. Residues 964 to 990 (STIPLICGISVGSALIILMSVGFCMIL) traverse the membrane as a helical segment. The Cytoplasmic portion of the chain corresponds to 991 to 1025 (KHRESNYYTKTRPKEGALHLETREVYSIDPYNPAS).

This sequence belongs to the receptors of complement activation (RCA) family. In terms of assembly, interacts (via Sushi domain 1 and 2) with C3. Interacts with CD19. Part of a complex composed of CD19, CR2/CD21, CD81 and IFITM1/CD225 in the membrane of mature B-cells. Interacts (via Sushi domain 1 and 2) with FCER2 (via the C-terminus). Interacts with CD23. Interacts with FCRL5. Interacts with CR1. Interacts with INFNA1. As to expression, B-lymphocytes.

The protein localises to the cell membrane. In terms of biological role, serves as a receptor for various ligands including complement component CD3d, HNRNPU OR IFNA1. When C3d is bound to antigens, attaches to C3d on B-cell surface and thereby facilitates the recognition and uptake of antigens by B-cells. This interaction enhances B-cell activation and subsequent immune responses. Forms a complex with several partners on the surface of B-cells including CD19, FCRL5 and CD81, to form the B-cell coreceptor complex that plays a crucial role in B-cell activation and signaling. Also induces specific intracellular signaling separately from the BCR and CD19 by activating the tyrosine kinase SRC, which then phosphorylates nucleolin/NCL and triggers AKT and GSK3 kinase activities in a SYK/CD19-independent manner. Acts as a ligand for CD23 (FcepsilonRII), a low-affinity receptor for IgE, which is expressed on B-cells and other immune cells, and thus participates in the regulation of IgE production. The chain is Complement receptor type 2 (Cr2) from Mus musculus (Mouse).